A 211-amino-acid polypeptide reads, in one-letter code: Proteasome subunit beta 2 (211 aa).

A propeptide spans 1–17 (removed in mature form; by autocatalysis); the sequence is MVIMGNELQLENKILKG. T18 serves as the catalytic Nucleophile.

The protein belongs to the peptidase T1B family. The 20S proteasome core is composed of 14 alpha and 14 beta subunits that assemble into four stacked heptameric rings, resulting in a barrel-shaped structure. The two inner rings, each composed of seven catalytic beta subunits, are sandwiched by two outer rings, each composed of seven alpha subunits. The catalytic chamber with the active sites is on the inside of the barrel. Has a gated structure, the ends of the cylinder being occluded by the N-termini of the alpha-subunits. Is capped at one or both ends by the proteasome regulatory ATPase, PAN.

It is found in the cytoplasm. It carries out the reaction Cleavage of peptide bonds with very broad specificity.. The formation of the proteasomal ATPase PAN-20S proteasome complex, via the docking of the C-termini of PAN into the intersubunit pockets in the alpha-rings, triggers opening of the gate for substrate entry. Interconversion between the open-gate and close-gate conformations leads to a dynamic regulation of the 20S proteasome proteolysis activity. Its function is as follows. Component of the proteasome core, a large protease complex with broad specificity involved in protein degradation. The chain is Proteasome subunit beta 2 from Saccharolobus solfataricus (strain 98/2) (Sulfolobus solfataricus).